The chain runs to 112 residues: UPF0251 protein MA_4245 (112 aa).

It belongs to the UPF0251 family.

The protein is UPF0251 protein MA_4245 of Methanosarcina acetivorans (strain ATCC 35395 / DSM 2834 / JCM 12185 / C2A).